A 651-amino-acid chain; its full sequence is Aspartate--tRNA ligase, mitochondrial (651 aa).

The transit peptide at 1-44 (MFCWLSRLCGELSTPTRRTTQLIWSSAARSMVLSSQRIPELSSF) directs the protein to the mitochondrion. The residue at position 216 (T216) is a Phosphothreonine. S239 bears the Phosphoserine mark. Residues 241 to 244 (QQFK) are aspartate. Residue R263 coordinates L-aspartate. 263–265 (RDE) is an ATP binding site. K379 carries the N6-acetyllysine modification. E532 lines the ATP pocket. R539 contributes to the L-aspartate binding site. 581-584 (GLDR) is an ATP binding site.

Belongs to the class-II aminoacyl-tRNA synthetase family. Type 1 subfamily. Homodimer.

The protein localises to the mitochondrion matrix. Its subcellular location is the mitochondrion membrane. It carries out the reaction tRNA(Asp) + L-aspartate + ATP = L-aspartyl-tRNA(Asp) + AMP + diphosphate. Catalyzes the attachment of aspartate to tRNA(Asp) in a two-step reaction: aspartate is first activated by ATP to form Asp-AMP and then transferred to the acceptor end of tRNA(Asp). The protein is Aspartate--tRNA ligase, mitochondrial (DARS2) of Bos taurus (Bovine).